Reading from the N-terminus, the 31-residue chain is 23S rRNA methylase leader peptide (31 aa).

Its function is as follows. This peptide is involved in the control mechanism of the synthesis of the erythromycin resistance protein. This chain is 23S rRNA methylase leader peptide (ermC), found in Escherichia coli.